We begin with the raw amino-acid sequence, 373 residues long: Ribosomal protein uL16 3-hydroxylase (373 aa).

The 128-residue stretch at 92–219 (PTAALMRPFR…LISGFADYVL (128 aa)) folds into the JmjC domain. Residues serine 114, 125 to 127 (HLD), arginine 140, and histidine 187 each bind substrate. Histidine 125 and aspartate 127 together coordinate Fe cation. Position 187 (histidine 187) interacts with Fe cation.

The protein belongs to the ROX family. RoxA/YcfD subfamily. Homodimer. Fe(2+) is required as a cofactor.

The enzyme catalyses L-arginyl-[ribosomal protein uL16] + 2-oxoglutarate + O2 = (3R)-3-hydroxy-L-arginyl-[ribosomal protein uL16] + succinate + CO2. Its function is as follows. Growth-regulating oxygenase that catalyzes the hydroxylation of ribosomal protein uL16 on 'Arg-81'. The sequence is that of Ribosomal protein uL16 3-hydroxylase (roxA) from Escherichia coli (strain K12).